The chain runs to 577 residues: Laccase-25 (577 aa).

An N-terminal signal peptide occupies residues 1-22; that stretch reads MTLHWSLLLFIAIALVSSVAQA. Plastocyanin-like domains lie at 30-147 and 158-313; these read NVGN…PRGG and KEHV…YAGA. N-linked (GlcNAc...) asparagine glycosylation is present at N33. Residues H81 and H83 each coordinate Cu cation. An N-linked (GlcNAc...) asparagine glycan is attached at N109. Residues H126 and H128 each coordinate Cu cation. 10 N-linked (GlcNAc...) asparagine glycosylation sites follow: N169, N203, N208, N218, N332, N383, N396, N404, N441, and N459. The Plastocyanin-like 3 domain maps to 423-560; the sequence is DFPDTPPVVF…AMVLEVLDGP (138 aa). Positions 477, 480, 482, 539, 540, 541, and 545 each coordinate Cu cation.

This sequence belongs to the multicopper oxidase family. The cofactor is Cu cation.

The protein localises to the secreted. It localises to the extracellular space. It is found in the apoplast. The enzyme catalyses 4 hydroquinone + O2 = 4 benzosemiquinone + 2 H2O. Its function is as follows. Lignin degradation and detoxification of lignin-derived products. This chain is Laccase-25 (LAC25), found in Oryza sativa subsp. japonica (Rice).